A 264-amino-acid chain; its full sequence is Sexual differentiation protein ste4 (264 aa).

Residues 11–73 enclose the SAM domain; the sequence is WNNEAVCNWI…LSAIQSMKKQ (63 aa). The leucine-zipper stretch occupies residues 111–139; that stretch reads LEKRVEYLETENTKLVKTLNSLNSEFLQL. Residues 176–264 form the Ras-associating domain; it reads GSFDLEVNDS…PSFVLSRRSC (89 aa).

As to quaternary structure, homodimer or heterodimer with another leucine-zipper protein.

Essential for mating and meiosis. The polypeptide is Sexual differentiation protein ste4 (ste4) (Schizosaccharomyces pombe (strain 972 / ATCC 24843) (Fission yeast)).